The sequence spans 147 residues: D-aminoacyl-tRNA deacylase (147 aa).

The short motif at 137–138 is the Gly-cisPro motif, important for rejection of L-amino acids element; it reads GP.

This sequence belongs to the DTD family. In terms of assembly, homodimer.

It is found in the cytoplasm. The enzyme catalyses glycyl-tRNA(Ala) + H2O = tRNA(Ala) + glycine + H(+). It carries out the reaction a D-aminoacyl-tRNA + H2O = a tRNA + a D-alpha-amino acid + H(+). In terms of biological role, an aminoacyl-tRNA editing enzyme that deacylates mischarged D-aminoacyl-tRNAs. Also deacylates mischarged glycyl-tRNA(Ala), protecting cells against glycine mischarging by AlaRS. Acts via tRNA-based rather than protein-based catalysis; rejects L-amino acids rather than detecting D-amino acids in the active site. By recycling D-aminoacyl-tRNA to D-amino acids and free tRNA molecules, this enzyme counteracts the toxicity associated with the formation of D-aminoacyl-tRNA entities in vivo and helps enforce protein L-homochirality. The sequence is that of D-aminoacyl-tRNA deacylase from Levilactobacillus brevis (strain ATCC 367 / BCRC 12310 / CIP 105137 / JCM 1170 / LMG 11437 / NCIMB 947 / NCTC 947) (Lactobacillus brevis).